The sequence spans 189 residues: Holliday junction branch migration complex subunit RuvA (189 aa).

The domain I stretch occupies residues 1–63 (MIYAMYGVLE…DDEISLYGFS (63 aa)). The domain II stretch occupies residues 64–135 (DVLKLKLFEK…ELKDSMKEFD (72 aa)). Residues 135-139 (DVTLT) are flexible linker. Residues 140–189 (EKDKKILEAIEALVTLGFSRNQSKKAVTQILKKDDSLDDIIKKALKFLSR) are domain III.

Belongs to the RuvA family. Homotetramer. Forms an RuvA(8)-RuvB(12)-Holliday junction (HJ) complex. HJ DNA is sandwiched between 2 RuvA tetramers; dsDNA enters through RuvA and exits via RuvB. An RuvB hexamer assembles on each DNA strand where it exits the tetramer. Each RuvB hexamer is contacted by two RuvA subunits (via domain III) on 2 adjacent RuvB subunits; this complex drives branch migration. In the full resolvosome a probable DNA-RuvA(4)-RuvB(12)-RuvC(2) complex forms which resolves the HJ.

The protein resides in the cytoplasm. In terms of biological role, the RuvA-RuvB-RuvC complex processes Holliday junction (HJ) DNA during genetic recombination and DNA repair, while the RuvA-RuvB complex plays an important role in the rescue of blocked DNA replication forks via replication fork reversal (RFR). RuvA specifically binds to HJ cruciform DNA, conferring on it an open structure. The RuvB hexamer acts as an ATP-dependent pump, pulling dsDNA into and through the RuvAB complex. HJ branch migration allows RuvC to scan DNA until it finds its consensus sequence, where it cleaves and resolves the cruciform DNA. The polypeptide is Holliday junction branch migration complex subunit RuvA (Thermosipho melanesiensis (strain DSM 12029 / CIP 104789 / BI429)).